The sequence spans 807 residues: Anaphase-promoting complex subunit 4 (807 aa).

Phosphotyrosine is present on Tyr469. Residues 755 to 788 (DESSDDEEEAGGKPVKIKEEVLSESETEAHQDAA) form a disordered region. A phosphoserine mark is found at Ser757 and Ser758. Over residues 770-785 (KIKEEVLSESETEAHQ) the composition is skewed to basic and acidic residues. Lys772 is covalently cross-linked (Glycyl lysine isopeptide (Lys-Gly) (interchain with G-Cter in SUMO2)). Ser777 and Ser779 each carry phosphoserine. Lys797 participates in a covalent cross-link: Glycyl lysine isopeptide (Lys-Gly) (interchain with G-Cter in SUMO2).

It belongs to the APC4 family. The mammalian APC/C is composed at least of 14 distinct subunits ANAPC1, ANAPC2, CDC27/APC3, ANAPC4, ANAPC5, CDC16/APC6, ANAPC7, CDC23/APC8, ANAPC10, ANAPC11, CDC26/APC12, ANAPC13, ANAPC15 and ANAPC16 that assemble into a complex of at least 19 chains with a combined molecular mass of around 1.2 MDa; APC/C interacts with FZR1 and FBXO5. In the context of the APC/C complex, directly interacts with UBE2S. Interacts with FBXO43.

It localises to the nucleus. Its pathway is protein modification; protein ubiquitination. Component of the anaphase promoting complex/cyclosome (APC/C), a cell cycle-regulated E3 ubiquitin ligase that controls progression through mitosis and the G1 phase of the cell cycle. The APC/C complex acts by mediating ubiquitination and subsequent degradation of target proteins: it mainly mediates the formation of 'Lys-11'-linked polyubiquitin chains and, to a lower extent, the formation of 'Lys-48'- and 'Lys-63'-linked polyubiquitin chains. The APC/C complex catalyzes assembly of branched 'Lys-11'-/'Lys-48'-linked branched ubiquitin chains on target proteins. This Mus musculus (Mouse) protein is Anaphase-promoting complex subunit 4 (Anapc4).